The chain runs to 285 residues: Bifunctional protein FolD (285 aa).

166 to 168 (GAS) is an NADP(+) binding site.

Belongs to the tetrahydrofolate dehydrogenase/cyclohydrolase family. As to quaternary structure, homodimer.

It catalyses the reaction (6R)-5,10-methylene-5,6,7,8-tetrahydrofolate + NADP(+) = (6R)-5,10-methenyltetrahydrofolate + NADPH. The enzyme catalyses (6R)-5,10-methenyltetrahydrofolate + H2O = (6R)-10-formyltetrahydrofolate + H(+). It functions in the pathway one-carbon metabolism; tetrahydrofolate interconversion. Its function is as follows. Catalyzes the oxidation of 5,10-methylenetetrahydrofolate to 5,10-methenyltetrahydrofolate and then the hydrolysis of 5,10-methenyltetrahydrofolate to 10-formyltetrahydrofolate. This chain is Bifunctional protein FolD, found in Thioalkalivibrio sulfidiphilus (strain HL-EbGR7).